A 466-amino-acid polypeptide reads, in one-letter code: Cysteine--tRNA ligase (466 aa).

Cys33 serves as a coordination point for Zn(2+). Residues 35–45 (PTVYDFAHIGN) carry the 'HIGH' region motif. Residues Cys221, His246, and Glu250 each coordinate Zn(2+). The 'KMSKS' region signature appears at 279–283 (KMSKS). Residue Lys282 coordinates ATP.

The protein belongs to the class-I aminoacyl-tRNA synthetase family. Monomer. Requires Zn(2+) as cofactor.

Its subcellular location is the cytoplasm. It carries out the reaction tRNA(Cys) + L-cysteine + ATP = L-cysteinyl-tRNA(Cys) + AMP + diphosphate. The protein is Cysteine--tRNA ligase of Sinorhizobium medicae (strain WSM419) (Ensifer medicae).